Here is a 216-residue protein sequence, read N- to C-terminus: Octanoyltransferase (216 aa).

Residues 33 to 212 form the BPL/LPL catalytic domain; the sequence is AHTPDELWLV…ILSNILGLTA (180 aa). Substrate is bound by residues 72 to 79, 139 to 141, and 152 to 154; these read RGGQVTYH, SLG, and GVA. Cys-170 acts as the Acyl-thioester intermediate in catalysis.

It belongs to the LipB family.

It localises to the cytoplasm. It carries out the reaction octanoyl-[ACP] + L-lysyl-[protein] = N(6)-octanoyl-L-lysyl-[protein] + holo-[ACP] + H(+). It functions in the pathway protein modification; protein lipoylation via endogenous pathway; protein N(6)-(lipoyl)lysine from octanoyl-[acyl-carrier-protein]: step 1/2. Its function is as follows. Catalyzes the transfer of endogenously produced octanoic acid from octanoyl-acyl-carrier-protein onto the lipoyl domains of lipoate-dependent enzymes. Lipoyl-ACP can also act as a substrate although octanoyl-ACP is likely to be the physiological substrate. The polypeptide is Octanoyltransferase (Saccharophagus degradans (strain 2-40 / ATCC 43961 / DSM 17024)).